Reading from the N-terminus, the 328-residue chain is DNA-directed RNA polymerase subunit alpha (328 aa).

Positions 1–230 (MNKIKITPSV…QSQMEIFTND (230 aa)) are alpha N-terminal domain (alpha-NTD). The alpha C-terminal domain (alpha-CTD) stretch occupies residues 243–328 (NSEIFYQPLD…ILKKIEQNKS (86 aa)).

Belongs to the RNA polymerase alpha chain family. In terms of assembly, homodimer. The RNAP catalytic core consists of 2 alpha, 1 beta, 1 beta' and 1 omega subunit. When a sigma factor is associated with the core the holoenzyme is formed, which can initiate transcription.

It catalyses the reaction RNA(n) + a ribonucleoside 5'-triphosphate = RNA(n+1) + diphosphate. DNA-dependent RNA polymerase catalyzes the transcription of DNA into RNA using the four ribonucleoside triphosphates as substrates. The polypeptide is DNA-directed RNA polymerase subunit alpha (Nitratiruptor sp. (strain SB155-2)).